The following is a 334-amino-acid chain: AA9 family lytic polysaccharide monooxygenase A (334 aa).

The N-terminal stretch at Met-1 to Ala-22 is a signal peptide. Cu(2+)-binding residues include His-23 and His-108. Intrachain disulfides connect Cys-78/Cys-200 and Cys-119/Cys-123. A glycan (N-linked (GlcNAc...) asparagine) is linked at Asn-160. The O2 site is built by His-186 and Gln-195. Tyr-197 provides a ligand contact to Cu(2+). An N-linked (GlcNAc...) asparagine glycan is attached at Asn-208. Positions Gly-244–Pro-304 are disordered. The span at Thr-249–Pro-265 shows a compositional bias: low complexity.

It belongs to the polysaccharide monooxygenase AA9 family. The cofactor is Cu(2+).

Its subcellular location is the secreted. It catalyses the reaction [(1-&gt;4)-beta-D-glucosyl]n+m + reduced acceptor + O2 = 4-dehydro-beta-D-glucosyl-[(1-&gt;4)-beta-D-glucosyl]n-1 + [(1-&gt;4)-beta-D-glucosyl]m + acceptor + H2O.. Lytic polysaccharide monooxygenase (LPMO) that depolymerizes crystalline and amorphous polysaccharides via the oxidation of scissile alpha- or beta-(1-4)-glycosidic bonds, yielding C1 or C4 oxidation products. Catalysis by LPMOs requires the reduction of the active-site copper from Cu(II) to Cu(I) by a reducing agent and H(2)O(2) or O(2) as a cosubstrate. Active on hemicelluloses, including xylan, glucomannan, and xyloglucan. Shows clear activity on cellooligosaccharides, generating C4 oxidation products. Also displays activity on konjac glucomannan (KGM), a linear beta-1,4-linked mannan with randomly distributed glucosyl residues; as well as trace activity on lichenan, a linear beta-1,3-beta-1,4-glucan with a 1:2 ratio of beta-1,3 to beta-1,4 linkages. Has no activity on ivory nut mannan (INM), a linear beta-1,4-linked mannan without substitutions. The chain is AA9 family lytic polysaccharide monooxygenase A from Malbranchea cinnamomea (Thermophilic fungus).